The following is a 429-amino-acid chain: UPF0597 protein AHA_1619 (429 aa).

This sequence belongs to the UPF0597 family.

The protein is UPF0597 protein AHA_1619 of Aeromonas hydrophila subsp. hydrophila (strain ATCC 7966 / DSM 30187 / BCRC 13018 / CCUG 14551 / JCM 1027 / KCTC 2358 / NCIMB 9240 / NCTC 8049).